The primary structure comprises 366 residues: D-alanine--D-alanine ligase (366 aa).

The region spanning 149 to 358 is the ATP-grasp domain; the sequence is KIAFDHAGLP…FSELVDTLIQ (210 aa). Residue 185–240 coordinates ATP; sequence ETTLEYPCFVKPANLGSSVGIAKVRSRSELETALDNAASYDRRIIVEAGVEAKELE. Positions 311, 325, and 327 each coordinate Mg(2+).

It belongs to the D-alanine--D-alanine ligase family. Mg(2+) serves as cofactor. Requires Mn(2+) as cofactor.

The protein localises to the cytoplasm. The enzyme catalyses 2 D-alanine + ATP = D-alanyl-D-alanine + ADP + phosphate + H(+). The protein operates within cell wall biogenesis; peptidoglycan biosynthesis. In terms of biological role, cell wall formation. In Trichodesmium erythraeum (strain IMS101), this protein is D-alanine--D-alanine ligase.